Reading from the N-terminus, the 167-residue chain is NADH-ubiquinone oxidoreductase chain 4 (167 aa).

Transmembrane regions (helical) follow at residues 2–22, 44–64, and 86–106; these read FIGA…LFCL, LLPL…ALPP, and IILV…MLIM.

Belongs to the complex I subunit 4 family.

It is found in the mitochondrion membrane. The catalysed reaction is a ubiquinone + NADH + 5 H(+)(in) = a ubiquinol + NAD(+) + 4 H(+)(out). In terms of biological role, core subunit of the mitochondrial membrane respiratory chain NADH dehydrogenase (Complex I) that is believed to belong to the minimal assembly required for catalysis. Complex I functions in the transfer of electrons from NADH to the respiratory chain. The immediate electron acceptor for the enzyme is believed to be ubiquinone. This chain is NADH-ubiquinone oxidoreductase chain 4 (MT-ND4), found in Carlito syrichta (Philippine tarsier).